A 370-amino-acid chain; its full sequence is Queuine tRNA-ribosyltransferase (370 aa).

Aspartate 89 serves as the catalytic Proton acceptor. Substrate contacts are provided by residues 89 to 93 (DSGGF), aspartate 143, and glycine 214. The segment at 245–251 (GVGKPED) is RNA binding. Aspartate 264 (nucleophile) is an active-site residue. The interval 269–273 (TRNAR) is RNA binding; important for wobble base 34 recognition. Zn(2+) is bound by residues cysteine 302, cysteine 304, cysteine 307, and histidine 333.

This sequence belongs to the queuine tRNA-ribosyltransferase family. In terms of assembly, homodimer. Within each dimer, one monomer is responsible for RNA recognition and catalysis, while the other monomer binds to the replacement base PreQ1. Zn(2+) serves as cofactor.

The enzyme catalyses 7-aminomethyl-7-carbaguanine + guanosine(34) in tRNA = 7-aminomethyl-7-carbaguanosine(34) in tRNA + guanine. It participates in tRNA modification; tRNA-queuosine biosynthesis. Its function is as follows. Catalyzes the base-exchange of a guanine (G) residue with the queuine precursor 7-aminomethyl-7-deazaguanine (PreQ1) at position 34 (anticodon wobble position) in tRNAs with GU(N) anticodons (tRNA-Asp, -Asn, -His and -Tyr). Catalysis occurs through a double-displacement mechanism. The nucleophile active site attacks the C1' of nucleotide 34 to detach the guanine base from the RNA, forming a covalent enzyme-RNA intermediate. The proton acceptor active site deprotonates the incoming PreQ1, allowing a nucleophilic attack on the C1' of the ribose to form the product. After dissociation, two additional enzymatic reactions on the tRNA convert PreQ1 to queuine (Q), resulting in the hypermodified nucleoside queuosine (7-(((4,5-cis-dihydroxy-2-cyclopenten-1-yl)amino)methyl)-7-deazaguanosine). This is Queuine tRNA-ribosyltransferase from Buchnera aphidicola subsp. Acyrthosiphon pisum (strain APS) (Acyrthosiphon pisum symbiotic bacterium).